Reading from the N-terminus, the 233-residue chain is Cobalt-containing nitrile hydratase subunit beta (233 aa).

The protein belongs to the nitrile hydratase subunit beta family. In terms of assembly, heterotetramer of two alpha and two beta chains.

The enzyme catalyses an aliphatic primary amide = an aliphatic nitrile + H2O. In terms of biological role, NHase catalyzes the hydration of various nitrile compounds to the corresponding amides. The chain is Cobalt-containing nitrile hydratase subunit beta from Pseudonocardia thermophila.